The primary structure comprises 66 residues: Large ribosomal subunit protein bL35 (66 aa).

It belongs to the bacterial ribosomal protein bL35 family.

The protein is Large ribosomal subunit protein bL35 of Caulobacter vibrioides (strain ATCC 19089 / CIP 103742 / CB 15) (Caulobacter crescentus).